We begin with the raw amino-acid sequence, 1209 residues long: MANGGGGGGGSSGGGGGGGGGSGLRMSSNIHANNLSLDASSSSSSSSSSSSSSSSSSSSSVHEPKMDALIIPVTMEVPCDSRGQRMWWAFLASSMVTFFGGLFIILLWRTLKYLWTVCCHCGGKTKEAQKINNGSSQADGTLKPVDEKEEVVAAEVGWMTSVKDWAGVMISAQTLTGRVLVVLVFALSIGALVIYFIDSSNPIESCQNFYKDFTLQIDMAFNVFFLLYFGLRFIAANDKLWFWLEVNSVVDFFTVPPVFVSVYLNRSWLGLRFLRALRLIQFSEILQFLNILKTSNSIKLVNLLSIFISTWLTAAGFIHLVENSGDPWENFQNNQALTYWECVYLLMVTMSTVGYGDVYAKTTLGRLFMVFFILGGLAMFASYVPEIIELIGNRKKYGGSYSAVSGRKHIVVCGHITLESVSNFLKDFLHKDRDDVNVEIVFLHNISPNLELEALFKRHFTQVEFYQGSVLNPHDLARVKIESADACLILANKYCADPDAEDASNIMRVISIKNYHPKIRIITQMLQYHNKAHLLNIPSWNWKEGDDAICLAELKLGFIAQSCLAQGLSTMLANLFSMRSFIKIEEDTWQKYYLEGVSNEMYTEYLSSAFVGLSFPTVCELCFVKLKLLMIAIEYKSANRESRSRKRILINPGNHLKIQEGTLGFFIASDAKEVKRAFFYCKACHDDVTDPKRIKKCGCRRLEDEQPPTLSPKKKQRNGGMRNSPNTSPKLMRHDPLLIPGNDQIDNMDSNVKKYDSTGMFHWCAPKEIEKVILTRSEAAMTVLSGHVVVCIFGDVSSALIGLRNLVMPLRASNFHYHELKHIVFVGSIEYLKREWETLHNFPKVSILPGTPLSRADLRAVNINLCDMCVILSANQNNIDDTSLQDKECILASLNIKSMQFDDSIGVLQANSQGFTPPGMDRSSPDNSPVHGMLRQPSITTGVNIPIITELAKPGKLPLVSVNQEKNSGTHILMITELVNDTNVQFLDQDDDDDPDTELYLTQPFACGTAFAVSVLDSLMSATYFNDNILTLIRTLVTGGATPELEALIAEENALRGGYSTPQTLANRDRCRVAQLALLDGPFADLGDGGCYGDLFCKALKTYNMLCFGIYRLRDAHLSTPSQCTKRYVITNPPYEFELVPTDLIFCLMQFDHNAGQSRASLSHSSHSSQSSSKKSSSVHSIPSTANRPNRPKSRESRDKQNRKEMVYR.

The segment covering 1 to 23 (MANGGGGGGGSSGGGGGGGGGSG) has biased composition (gly residues). The disordered stretch occupies residues 1–61 (MANGGGGGGG…SSSSSSSSSV (61 aa)). The Extracellular portion of the chain corresponds to 1–86 (MANGGGGGGG…VPCDSRGQRM (86 aa)). Over residues 25 to 39 (RMSSNIHANNLSLDA) the composition is skewed to polar residues. Residues 40–60 (SSSSSSSSSSSSSSSSSSSSS) are compositionally biased toward low complexity. The helical transmembrane segment at 87-107 (WWAFLASSMVTFFGGLFIILL) threads the bilayer. At 108–178 (WRTLKYLWTV…MISAQTLTGR (71 aa)) the chain is on the cytoplasmic side. 3 S-palmitoyl cysteine lipidation sites follow: Cys-118, Cys-119, and Cys-121. A helical transmembrane segment spans residues 179-199 (VLVVLVFALSIGALVIYFIDS). At 200 to 214 (SNPIESCQNFYKDFT) the chain is on the extracellular side. The chain crosses the membrane as a helical span at residues 215–235 (LQIDMAFNVFFLLYFGLRFIA). Over 236-239 (ANDK) the chain is Cytoplasmic. A helical membrane pass occupies residues 240–260 (LWFWLEVNSVVDFFTVPPVFV). The Extracellular segment spans residues 261 to 264 (SVYL). Residues 265–285 (NRSWLGLRFLRALRLIQFSEI) form a helical; Voltage-sensor membrane-spanning segment. Residues 286–300 (LQFLNILKTSNSIKL) lie on the Cytoplasmic side of the membrane. The chain crosses the membrane as a helical span at residues 301-321 (VNLLSIFISTWLTAAGFIHLV). The Extracellular portion of the chain corresponds to 322-335 (ENSGDPWENFQNNQ). Residues 336 to 358 (ALTYWECVYLLMVTMSTVGYGDV) constitute an intramembrane region (pore-forming). Positions 352–355 (TVGY) match the Selectivity for potassium motif. Over 359–367 (YAKTTLGRL) the chain is Extracellular. A helical transmembrane segment spans residues 368-388 (FMVFFILGGLAMFASYVPEII). At 389–1209 (ELIGNRKKYG…KQNRKEMVYR (821 aa)) the chain is on the cytoplasmic side. The 143-residue stretch at 407–549 (RKHIVVCGHI…WNWKEGDDAI (143 aa)) folds into the RCK N-terminal 1 domain. Mg(2+) contacts are provided by Glu-439, Gln-462, and Glu-464. The segment S7 stretch occupies residues 556 to 576 (LGFIAQSCLAQGLSTMLANLF). The segment S8 stretch occupies residues 613 to 633 (LSFPTVCELCFVKLKLLMIAI). A Phosphothreonine modification is found at Asp-670. Position 672 is a phosphoserine (Lys-672). Positions 681 to 685 (CKACH) are heme-binding motif. Positions 703-733 (EDEQPPTLSPKKKQRNGGMRNSPNTSPKLMR) are disordered. Thr-709 carries the phosphothreonine modification. Ser-711, Ser-724, and Ser-728 each carry phosphoserine. Positions 783 to 803 (VLSGHVVVCIFGDVSSALIGL) are segment S9. Residues 785–929 (SGHVVVCIFG…MDRSSPDNSP (145 aa)) enclose the RCK N-terminal 2 domain. The residue at position 916 (Thr-916) is a Phosphothreonine. Phosphoserine occurs at positions 924 and 928. The Calcium bowl motif lies at 976–998 (TELVNDTNVQFLDQDDDDDPDTE). 4 residues coordinate Ca(2+): Gln-985, Asp-988, Asp-991, and Asp-993. The segment S10 stretch occupies residues 1005-1025 (FACGTAFAVSVLDSLMSATYF). A compositionally biased stretch (low complexity) spans 1159–1184 (RASLSHSSHSSQSSSKKSSSVHSIPS). The disordered stretch occupies residues 1159 to 1209 (RASLSHSSHSSQSSSKKSSSVHSIPSTANRPNRPKSRESRDKQNRKEMVYR). Positions 1193 to 1209 (KSRESRDKQNRKEMVYR) are enriched in basic and acidic residues. A phosphoserine mark is found at Ser-1194 and Ser-1197.

It belongs to the potassium channel family. Calcium-activated (TC 1.A.1.3) subfamily. KCa1.1/KCNMA1 sub-subfamily. Homotetramer; which constitutes the calcium-activated potassium channel. Interacts with beta subunits KCNMB1, KCNMB2, KCNMB3 and KCNMB4. Interacts with gamma subunits LRRC26, LRRC38, LRRC52 and LRRC55. Beta and gamma subunits are accessory, and modulate its activity. Interacts with RAB11B. Post-translationally, phosphorylated. Phosphorylation by kinases such as PKA and/or PKG. In smooth muscles, phosphorylation affects its activity. Palmitoylation by ZDHHC22 and ZDHHC23 within the intracellular linker between the S0 and S1 transmembrane domains regulates localization to the plasma membrane. Depalmitoylated by LYPLA1 and LYPLAL1, leading to retard exit from the trans-Golgi network.

It is found in the cell membrane. It carries out the reaction K(+)(in) = K(+)(out). With respect to regulation, ethanol and carbon monoxide-bound heme increase channel activation. Heme inhibits channel activation. Its function is as follows. Potassium channel activated by both membrane depolarization or increase in cytosolic Ca(2+) that mediates export of K(+). It is also activated by the concentration of cytosolic Mg(2+). Its activation dampens the excitatory events that elevate the cytosolic Ca(2+) concentration and/or depolarize the cell membrane. It therefore contributes to repolarization of the membrane potential. Plays a key role in controlling excitability in a number of systems, such as regulation of the contraction of smooth muscle, the tuning of hair cells in the cochlea, regulation of transmitter release, and innate immunity. In smooth muscles, its activation by high level of Ca(2+), caused by ryanodine receptors in the sarcoplasmic reticulum, regulates the membrane potential. In cochlea cells, its number and kinetic properties partly determine the characteristic frequency of each hair cell and thereby helps to establish a tonotopic map. Kinetics of KCNMA1 channels are determined by alternative splicing, phosphorylation status and its combination with modulating beta subunits. Highly sensitive to both iberiotoxin (IbTx) and charybdotoxin (CTX). In terms of biological role, potassium channel activated by both membrane depolarization or increase in cytosolic Ca(2+) that mediates export of K(+). This is Calcium-activated potassium channel subunit alpha-1 (Kcnma1) from Mus musculus (Mouse).